The chain runs to 290 residues: Translin-associated protein X (290 aa).

Positions 1–32 are disordered; sequence MSNKEGSGGFRKRKHDNFPHNQRREGKDVNSS. Basic and acidic residues predominate over residues 16-28; that stretch reads DNFPHNQRREGKD. Residues 73 to 208 form an interaction with C1D region; sequence LLHRITSAPD…MRMCINSVGN (136 aa). Glu-129 and Glu-197 together coordinate Mg(2+). Lys-279 participates in a covalent cross-link: Glycyl lysine isopeptide (Lys-Gly) (interchain with G-Cter in SUMO2).

It belongs to the translin family. As to quaternary structure, ring-shaped heterooctamer of six TSN and two TSNAX subunits. Interacts with GOLGA3, TSNAXIP1, SUN1 and AKAP9. Interacts with the homodimeric form of C1D following gamma-radiation. Interacts with TSN and C1D in a mutually exclusive manner. Post-translationally, sumoylated with SUMO1.

It is found in the cytoplasm. The protein localises to the perinuclear region. The protein resides in the golgi apparatus. Its subcellular location is the nucleus. In terms of biological role, acts in combination with TSN as an endonuclease involved in the activation of the RNA-induced silencing complex (RISC). Possible role in spermatogenesis. This is Translin-associated protein X (TSNAX) from Pongo abelii (Sumatran orangutan).